A 325-amino-acid polypeptide reads, in one-letter code: Succinylglutamate desuccinylase (325 aa).

Positions 51, 54, and 148 each coordinate Zn(2+). The active site involves glutamate 211.

It belongs to the AspA/AstE family. Succinylglutamate desuccinylase subfamily. Zn(2+) serves as cofactor.

The enzyme catalyses N-succinyl-L-glutamate + H2O = L-glutamate + succinate. The protein operates within amino-acid degradation; L-arginine degradation via AST pathway; L-glutamate and succinate from L-arginine: step 5/5. Functionally, transforms N(2)-succinylglutamate into succinate and glutamate. This is Succinylglutamate desuccinylase from Photorhabdus laumondii subsp. laumondii (strain DSM 15139 / CIP 105565 / TT01) (Photorhabdus luminescens subsp. laumondii).